We begin with the raw amino-acid sequence, 255 residues long: Testis-specific H1 histone (255 aa).

The interval 1-54 (MEQALTGEAQSRWPRRGGSGAMAEAPGPSGESRGHSATQLPAEKTVGGPSRGCS) is disordered. S56 carries the phosphoserine modification. The segment covering 124–134 (KVPKPRRKPGR) has biased composition (basic residues). Positions 124-255 (KVPKPRRKPG…PKKPAQRTIQ (132 aa)) are disordered. Residues 142 to 152 (RAPWRTPAAPR) show a composition bias toward low complexity. Basic residues-rich tracts occupy residues 153–166 (SSRR…KAAR) and 174–194 (RNAR…RARP). Composition is skewed to basic and acidic residues over residues 195 to 230 (RAKE…PRSG) and 238 to 248 (KPREEKQEPKK).

The protein belongs to the histone H1/H5 family. In terms of tissue distribution, testis-specific.

It is found in the nucleus. Its subcellular location is the chromosome. Functionally, essential for normal spermatogenesis and male fertility. Required for proper cell restructuring and DNA condensation during the elongation phase of spermiogenesis. Involved in the histone-protamine transition of sperm chromatin and the subsequent production of functional sperm. Binds both double-stranded and single-stranded DNA, ATP and protamine-1. In Homo sapiens (Human), this protein is Testis-specific H1 histone.